The chain runs to 1437 residues: FYVE and coiled-coil domain-containing protein 1 (1437 aa).

Position 2 is an N-acetylalanine (alanine 2). The stretch at 4-30 (SSTETQLQRIIRDLQDAATELSHEFKE) forms a coiled coil. Residues 36 to 169 (TDDSTSLHKF…VQFDLAPRGY (134 aa)) form the RUN domain. At serine 196 the chain carries Phosphoserine. Coiled coils occupy residues 223-270 (SLNN…VSRQ), 305-846 (SQAT…SEGA), and 873-1110 (ALTA…KDAL). Threonine 372 carries the phosphothreonine modification. Serine 837 bears the Phosphoserine mark. The FYVE-type zinc-finger motif lies at 1132–1190 (DMEVNHCHDCKREFSWIVRRHHCRICGRIFCYYCCNNYVVTKPSGKKERCCRACFQKFG). 8 residues coordinate Zn(2+): cysteine 1138, cysteine 1141, cysteine 1154, cysteine 1157, cysteine 1162, cysteine 1165, cysteine 1182, and cysteine 1185. Disordered stretches follow at residues 1191–1227 (EGSG…SQGI) and 1253–1289 (SGSS…TEDV). Over residues 1194–1206 (GSNDSSGSGTSQG) the composition is skewed to low complexity. Composition is skewed to polar residues over residues 1218–1227 (SPQSIGSQGI) and 1253–1283 (SGSS…SLTP). A GOLD domain is found at 1296 to 1425 (EICLLKSGEL…SKKVLYHLTV (130 aa)).

In terms of assembly, can form homodimers. Interacts (via C-terminus) with MAP1LC3B. Interacts with RAB7A; the interaction with RAB7A induces FYCO1 recruitment to late endosomal/lysosomal compartments. Expressed in heart and testis. Expressed in the eye lens.

Its subcellular location is the cytoplasmic vesicle. The protein resides in the autophagosome. It is found in the endosome. The protein localises to the lysosome. Functionally, may mediate microtubule plus end-directed vesicle transport. The polypeptide is FYVE and coiled-coil domain-containing protein 1 (Fyco1) (Mus musculus (Mouse)).